The following is a 157-amino-acid chain: MGVFNFEDETTSIVAPARLYKALVTDSDNLIPKVIDAIQSIEIVEGNGGAGTIKKLTFVEGGETKYDLHKVDLVDDVNFAYNYSIVGGGGLPDTVEKISFESKLSAGPDGGSTAKLTVKYFTKGDAAPSEEEIKGGKARGDGLFKALEGYVLANPDY.

Belongs to the BetVI family. As to expression, high levels in roots and not detectable in hypocotyls, cotyledons, stems, leaves and flower buds of untreated plants. After induction, high levels are present in the vascular bundles of leaves.

The protein resides in the cytoplasm. This chain is Class-10 pathogenesis-related protein 1 (MSPR10-1), found in Medicago sativa (Alfalfa).